Reading from the N-terminus, the 508-residue chain is Putative POTE ankyrin domain family member M (508 aa).

ANK repeat units lie at residues 172–201 (QKRT…QLNI), 205–234 (KKRT…DPNI), 238–267 (YGNT…DIES), 271–300 (HGLT…NLNA), and 304–333 (YGRT…DVSS). A disordered region spans residues 369–487 (SSENSNPEQD…KQLSEEQNTG (119 aa)). Composition is skewed to basic and acidic residues over residues 377–392 (QDLK…RLKG) and 406–421 (EINK…EMKK). The span at 476–487 (TQKQLSEEQNTG) shows a compositional bias: polar residues.

Belongs to the POTE family.

The polypeptide is Putative POTE ankyrin domain family member M (POTEM) (Homo sapiens (Human)).